Here is a 300-residue protein sequence, read N- to C-terminus: Ribonuclease HIII (300 aa).

An RNase H type-2 domain is found at 83-300; it reads IPIIGSDEVG…THKAQALLTK (218 aa). A divalent metal cation is bound by residues Asp89, Glu90, and Asp194.

This sequence belongs to the RNase HII family. RnhC subfamily. It depends on Mn(2+) as a cofactor. Requires Mg(2+) as cofactor.

Its subcellular location is the cytoplasm. The enzyme catalyses Endonucleolytic cleavage to 5'-phosphomonoester.. In terms of biological role, endonuclease that specifically degrades the RNA of RNA-DNA hybrids. The protein is Ribonuclease HIII of Streptococcus pyogenes serotype M5 (strain Manfredo).